We begin with the raw amino-acid sequence, 41 residues long: MKKMRKRSFHELVMENKKELMTNTEYLNQLEEKLEQRFKQK.

This is an uncharacterized protein from Bacillus subtilis (strain 168).